The chain runs to 522 residues: Golgin subfamily A member 6-like protein 10 (522 aa).

A compositionally biased stretch (pro residues) spans 1–11; sequence MWPQPRLPPHP. A disordered region spans residues 1–77; the sequence is MWPQPRLPPH…DSATGIYGEG (77 aa). The segment covering 51–62 has biased composition (polar residues); the sequence is NGSSPDTATSGG. Residues 157–328 are a coiled coil; sequence SKVEQLQDET…RLCEQEKLPG (172 aa). A compositionally biased stretch (basic and acidic residues) spans 439 to 452; sequence KELEKSGGAEEPRG. The tract at residues 439 to 503 is disordered; sequence KELEKSGGAE…TGEAAGGAEE (65 aa). 2 stretches are compositionally biased toward low complexity: residues 456-471 and 489-503; these read AAAA…PQGA and GEAV…GAEE.

It belongs to the GOLGA6 family.

The sequence is that of Golgin subfamily A member 6-like protein 10 from Homo sapiens (Human).